A 338-amino-acid chain; its full sequence is D-xylulose reductase (338 aa).

Zn(2+) is bound by residues C40, H65, and E151.

This sequence belongs to the zinc-containing alcohol dehydrogenase family. Homotetramer. It depends on Zn(2+) as a cofactor.

The catalysed reaction is xylitol + NAD(+) = D-xylulose + NADH + H(+). In Morganella morganii (Proteus morganii), this protein is D-xylulose reductase.